A 342-amino-acid polypeptide reads, in one-letter code: MGVKIGELIEDKVELELSDIAGKKIALDAFNAMYQFLAKVRQPDGTPLMTSKGEITSVHSGIFYRTANFLKEGIIPIYVFDGEKPSFKSRAIEERVRAREEAELKWKEALEIGDLEEARKYAQAALNITGDIVEDCKTILKLMGVPIVQAPSEGEAQAAHMAMKGDVWATASQDYDSLLFGAPRLIRNLTITGKRKLPGKEVYVDINPELIELESVLKRNGISREQLIMIGILVGTDYNLGGVKGIGVKRALELVKKYKRPEDLFSKVPWEFDVDPISIYEFFLNPPTTDDYDTSLKRPMSDELLKFMVEEHEFSEERVKKVINEIEESYRMLSGGGLESWF.

The interval 1–99 is N-domain; the sequence is MGVKIGELIE…RAIEERVRAR (99 aa). Residues Asp28, Asp81, Glu153, Glu155, Asp174, Asp176, and Asp237 each coordinate Mg(2+). Positions 117 to 259 are I-domain; sequence EARKYAQAAL…RALELVKKYK (143 aa).

It belongs to the XPG/RAD2 endonuclease family. FEN1 subfamily. As to quaternary structure, interacts with PCNA. PCNA stimulates the nuclease activity without altering cleavage specificity. It depends on Mg(2+) as a cofactor.

Its function is as follows. Structure-specific nuclease with 5'-flap endonuclease and 5'-3' exonuclease activities involved in DNA replication and repair. During DNA replication, cleaves the 5'-overhanging flap structure that is generated by displacement synthesis when DNA polymerase encounters the 5'-end of a downstream Okazaki fragment. Binds the unpaired 3'-DNA end and kinks the DNA to facilitate 5' cleavage specificity. Cleaves one nucleotide into the double-stranded DNA from the junction in flap DNA, leaving a nick for ligation. Also involved in the base excision repair (BER) pathway. Acts as a genome stabilization factor that prevents flaps from equilibrating into structures that lead to duplications and deletions. Also possesses 5'-3' exonuclease activity on nicked or gapped double-stranded DNA. In Korarchaeum cryptofilum (strain OPF8), this protein is Flap endonuclease 1.